The following is a 508-amino-acid chain: Photosystem II CP47 reaction center protein (508 aa).

Helical transmembrane passes span 21 to 36 (SVHI…WAGS), 101 to 115 (IVFS…IWHW), 140 to 156 (GIHL…FGAF), 203 to 218 (IAAG…FHLS), 237 to 252 (VLSS…AFVV), and 457 to 472 (SFAL…HGSR).

It belongs to the PsbB/PsbC family. PsbB subfamily. PSII is composed of 1 copy each of membrane proteins PsbA, PsbB, PsbC, PsbD, PsbE, PsbF, PsbH, PsbI, PsbJ, PsbK, PsbL, PsbM, PsbT, PsbX, PsbY, PsbZ, Psb30/Ycf12, at least 3 peripheral proteins of the oxygen-evolving complex and a large number of cofactors. It forms dimeric complexes. Requires Binds multiple chlorophylls. PSII binds additional chlorophylls, carotenoids and specific lipids. as cofactor.

The protein localises to the plastid. It localises to the chloroplast thylakoid membrane. Its function is as follows. One of the components of the core complex of photosystem II (PSII). It binds chlorophyll and helps catalyze the primary light-induced photochemical processes of PSII. PSII is a light-driven water:plastoquinone oxidoreductase, using light energy to abstract electrons from H(2)O, generating O(2) and a proton gradient subsequently used for ATP formation. In Helianthus annuus (Common sunflower), this protein is Photosystem II CP47 reaction center protein.